The chain runs to 307 residues: Serine/threonine-protein phosphatase PP2A-2 catalytic subunit (307 aa).

The Mn(2+) site is built by aspartate 55, histidine 57, aspartate 83, and asparagine 115. Histidine 116 serves as the catalytic Proton donor. 2 residues coordinate Mn(2+): histidine 165 and histidine 239.

It belongs to the PPP phosphatase family. PP-2A subfamily. It depends on Mn(2+) as a cofactor.

The protein localises to the cytoplasm. The enzyme catalyses O-phospho-L-seryl-[protein] + H2O = L-seryl-[protein] + phosphate. It catalyses the reaction O-phospho-L-threonyl-[protein] + H2O = L-threonyl-[protein] + phosphate. The polypeptide is Serine/threonine-protein phosphatase PP2A-2 catalytic subunit (PP2A2) (Oryza sativa subsp. indica (Rice)).